Here is a 316-residue protein sequence, read N- to C-terminus: Ornithine carbamoyltransferase (316 aa).

Residues 57–60, glutamine 84, arginine 108, and 135–138 each bind carbamoyl phosphate; these read STRT and HPCQ. Residues asparagine 166, aspartate 230, and 234–235 contribute to the L-ornithine site; that span reads SM. Residues 269-270 and arginine 297 contribute to the carbamoyl phosphate site; that span reads CL.

This sequence belongs to the aspartate/ornithine carbamoyltransferase superfamily. OTCase family.

It localises to the cytoplasm. It carries out the reaction carbamoyl phosphate + L-ornithine = L-citrulline + phosphate + H(+). It participates in amino-acid degradation; L-arginine degradation via ADI pathway; carbamoyl phosphate from L-arginine: step 2/2. Its function is as follows. Reversibly catalyzes the transfer of the carbamoyl group from carbamoyl phosphate (CP) to the N(epsilon) atom of ornithine (ORN) to produce L-citrulline. The sequence is that of Ornithine carbamoyltransferase from Bacillus cereus (strain AH187).